The primary structure comprises 255 residues: Methionine aminopeptidase (255 aa).

His76 serves as a coordination point for substrate. Positions 93, 104, and 167 each coordinate a divalent metal cation. His174 lines the substrate pocket. Residues Glu201 and Glu232 each contribute to the a divalent metal cation site.

The protein belongs to the peptidase M24A family. Methionine aminopeptidase type 1 subfamily. In terms of assembly, monomer. The cofactor is Co(2+). Zn(2+) is required as a cofactor. Requires Mn(2+) as cofactor. Fe(2+) serves as cofactor.

The catalysed reaction is Release of N-terminal amino acids, preferentially methionine, from peptides and arylamides.. Its function is as follows. Removes the N-terminal methionine from nascent proteins. The N-terminal methionine is often cleaved when the second residue in the primary sequence is small and uncharged (Met-Ala-, Cys, Gly, Pro, Ser, Thr, or Val). Requires deformylation of the N(alpha)-formylated initiator methionine before it can be hydrolyzed. This chain is Methionine aminopeptidase, found in Treponema pallidum (strain Nichols).